Consider the following 132-residue polypeptide: L-ectoine synthase (132 aa).

The protein belongs to the ectoine synthase family.

It catalyses the reaction (2S)-4-acetamido-2-aminobutanoate = L-ectoine + H2O. The protein operates within amine and polyamine biosynthesis; ectoine biosynthesis; L-ectoine from L-aspartate 4-semialdehyde: step 3/3. In terms of biological role, catalyzes the circularization of gamma-N-acetyl-alpha,gamma-diaminobutyric acid (ADABA) to ectoine (1,4,5,6-tetrahydro-2-methyl-4-pyrimidine carboxylic acid), which is an excellent osmoprotectant. This is L-ectoine synthase from Rhodococcus opacus (strain B4).